A 255-amino-acid chain; its full sequence is Small ribosomal subunit protein uS2 (255 aa).

Residues 233-255 are disordered; sequence DFVAEEAASEESLEELAEIVEGK.

This sequence belongs to the universal ribosomal protein uS2 family.

The polypeptide is Small ribosomal subunit protein uS2 (Lactococcus lactis subsp. cremoris (strain SK11)).